Consider the following 530-residue polypeptide: S-adenosylhomocysteine hydrolase-like protein 1 (530 aa).

M1 carries the post-translational modification N-acetylmethionine. S2 is subject to N-acetylserine. S2 is subject to Phosphoserine. Residue K40 is modified to N6-acetyllysine. The segment at 53–103 (KFPTKTGRRSLSRSISQSSTDSYSSAASYTDSSDDEVSPREKQQTNSKGSS) is disordered. Over residues 64-83 (SRSISQSSTDSYSSAASYTD) the composition is skewed to low complexity. Residues 65–92 (RSISQSSTDSYSSAASYTDSSDDEVSPR) are PEST. Phosphoserine is present on residues S68, S71, S74, S77, and S84. Residues 138–201 (QGEKPLAGAK…EAGVAVFAWK (64 aa)) are interaction with BCL2L10. Substrate contacts are provided by T155, D229, E254, K284, and D288. Residues 281-448 (SVTKQKFDNL…EGRLLNLSCS (168 aa)) are NAD binding. NAD(+) contacts are provided by residues 318-322 (GYGEV), E341, and N376. Position 391 is a phosphoserine (S391). 397–399 (MGH) serves as a coordination point for NAD(+). Residues 520-530 (NGPFKPNYYRY) form a PDZ-binding region.

It belongs to the adenosylhomocysteinase family. Forms multimers. Forms heteromultimers with AHCYL2 (via the C-terminal region). Interacts (when phosphorylated) with ITPR1 (when not phosphorylated); the interaction suppresses inositol 1,4,5-trisphosphate binding to ITPR1. Interacts with BCL2L10; this strengthens the interaction of AHCYL1 with ITPR1. Interacts with CFTR and SLC26A6; the interactions take place once AHCYL1 is released from ITPR1 and increase CFTR and SLC26A6 activities. Interacts with RRM1; in a phosphorylation- and (dATP)-dependent manner. Interacts (via PEST domain when phosphorylated) with SLC4A4 isoform 1 but not isoform 2; the interaction increases SLC4A4 isoform 1 activity. Interacts (when phosphorylated) with SLC9A3; the interaction is required for SLC9A3 apical location and activity. Interacts (when phosphorylated) with FIP1L1; the interaction is direct and associates AHCYL1 with the CPSF complex and RNA. Interacts with PAPOLA. Interacts with ZCCHC4. Interacts with AHCY. It depends on NAD(+) as a cofactor. Phosphorylated at Ser/Thr residues between Ser-68 and Thr-72 in the PEST region: required for interaction with dATP-bound RRM1 and ITPR1. Phosphorylation at Ser-68 by PRKD1 and CAMK4 is required for further phosphorylations by CSNK1A1. Phosphorylation is induced by oxidative stress. Probably phosphorylated by CAMK2A; phosphorylation at Ser-68 may be required for interaction with SLC9A3. Dephosphorylated in response to apoptotic stress conditions which causes translocation of both AHCYL1 and BCL2L10 from mitochondria-associated endoplasmic reticulum membranes and promotes apoptosis. Expressed in dendritic cells.

The protein localises to the endoplasmic reticulum. The protein resides in the cytoplasm. It is found in the cytosol. Its subcellular location is the apical cell membrane. It localises to the microsome. In terms of biological role, multifaceted cellular regulator which coordinates several essential cellular functions including regulation of epithelial HCO3(-) and fluid secretion, mRNA processing and DNA replication. Regulates ITPR1 sensitivity to inositol 1,4,5-trisphosphate, competing for the common binding site and acting as endogenous 'pseudoligand' whose inhibitory activity can be modulated by its phosphorylation status. Promotes the formation of contact points between the endoplasmic reticulum (ER) and mitochondria, facilitating transfer of Ca(2+) from the ER to mitochondria. Under normal cellular conditions, functions cooperatively with BCL2L10 to limit ITPR1-mediated Ca(2+) release but, under apoptotic stress conditions, dephosphorylated which promotes dissociation of both AHCYL1 and BCL2L10 from mitochondria-associated endoplasmic reticulum membranes, inhibits BCL2L10 interaction with ITPR1 and leads to increased Ca(2+) transfer to mitochondria which promotes apoptosis. In the pancreatic and salivary ducts, at resting state, attenuates inositol 1,4,5-trisphosphate-induced calcium release by interacting with ITPR1. When extracellular stimuli induce ITPR1 phosphorylation or inositol 1,4,5-trisphosphate production, dissociates from ITPR1 to interact with CFTR and SLC26A6, mediating their synergistic activation by calcium and cAMP that stimulates the epithelial secretion of electrolytes and fluid. Also activates basolateral SLC4A4 isoform 1 to coordinate fluid and HCO3(-) secretion. Inhibits the effect of STK39 on SLC4A4 and CFTR by recruiting PP1 phosphatase which activates SLC4A4, SLC26A6 and CFTR through dephosphorylation. Mediates the induction of SLC9A3 surface expression produced by Angiotensin-2. Depending on the cell type, activates SLC9A3 in response to calcium or reverses SLC9A3R2-dependent calcium inhibition. May modulate the polyadenylation state of specific mRNAs, both by controlling the subcellular location of FIP1L1 and by inhibiting PAPOLA activity, in response to a stimulus that alters its phosphorylation state. Acts as a (dATP)-dependent inhibitor of ribonucleotide reductase large subunit RRM1, controlling the endogenous dNTP pool and ensuring normal cell cycle progression. In vitro does not exhibit any S-adenosyl-L-homocysteine hydrolase activity. The protein is S-adenosylhomocysteine hydrolase-like protein 1 of Homo sapiens (Human).